The primary structure comprises 72 residues: Large ribosomal subunit protein bL28 (72 aa).

It belongs to the bacterial ribosomal protein bL28 family.

This chain is Large ribosomal subunit protein bL28, found in Chlorobium phaeovibrioides (strain DSM 265 / 1930) (Prosthecochloris vibrioformis (strain DSM 265)).